The primary structure comprises 197 residues: Phospholipid hydroperoxide glutathione peroxidase (197 aa).

At Ser40 the chain carries Phosphoserine. Sec73 is an active-site residue. Position 73 (Sec73) is a non-standard amino acid, selenocysteine.

This sequence belongs to the glutathione peroxidase family. As to quaternary structure, monomer. Has a tendency to form higher mass oligomers. Interacts with FUNDC1; this interaction promotes GPX4 recruitment into mitochondria through TOM/TIM complex where it is degraded by mitophagy.

Its subcellular location is the mitochondrion. It localises to the cytoplasm. It catalyses the reaction a hydroperoxy polyunsaturated fatty acid + 2 glutathione = a hydroxy polyunsaturated fatty acid + glutathione disulfide + H2O. The catalysed reaction is 2 glutathione + H2O2 = glutathione disulfide + 2 H2O. The enzyme catalyses tert-butyl hydroperoxide + 2 glutathione = tert-butanol + glutathione disulfide + H2O. It carries out the reaction cumene hydroperoxide + 2 glutathione = 2-phenylpropan-2-ol + glutathione disulfide + H2O. It catalyses the reaction (9S)-hydroperoxy-(10E,12Z)-octadecadienoate + 2 glutathione = (9S)-hydroxy-(10E,12Z)-octadecadienoate + glutathione disulfide + H2O. The catalysed reaction is (13S)-hydroperoxy-(9Z,11E)-octadecadienoate + 2 glutathione = (13S)-hydroxy-(9Z,11E)-octadecadienoate + glutathione disulfide + H2O. The enzyme catalyses (5S)-hydroperoxy-(6E,8Z,11Z,14Z)-eicosatetraenoate + 2 glutathione = (5S)-hydroxy-(6E,8Z,11Z,14Z)-eicosatetraenoate + glutathione disulfide + H2O. It carries out the reaction (12R)-hydroperoxy-(5Z,8Z,10E,14Z)-eicosatetraenoate + 2 glutathione = (12R)-hydroxy-(5Z,8Z,10E,14Z)-eicosatetraenoate + glutathione disulfide + H2O. It catalyses the reaction (12S)-hydroperoxy-(5Z,8Z,10E,14Z)-eicosatetraenoate + 2 glutathione = (12S)-hydroxy-(5Z,8Z,10E,14Z)-eicosatetraenoate + glutathione disulfide + H2O. The catalysed reaction is (15S)-hydroperoxy-(5Z,8Z,11Z,13E)-eicosatetraenoate + 2 glutathione = (15S)-hydroxy-(5Z,8Z,11Z,13E)-eicosatetraenoate + glutathione disulfide + H2O. The enzyme catalyses (5S)-hydroperoxy-(6E,8Z,11Z,14Z,17Z)-eicosapentaenoate + 2 glutathione = (5S)-hydroxy-(6E,8Z,11Z,14Z,17Z)-eicosapentaenoate + glutathione disulfide + H2O. It carries out the reaction (12S)-hydroperoxy-(5Z,8Z,10E,14Z,17Z)-eicosapentaenoate + 2 glutathione = (12S)-hydroxy-(5Z,8Z,10E,14Z,17Z)-eicosapentaenoate + glutathione disulfide + H2O. It catalyses the reaction (15S)-hydroperoxy-(5Z,8Z,11Z,13E,17Z)-eicosapentaenoate + 2 glutathione = (15S)-hydroxy-(5Z,8Z,11Z,13E,17Z)-eicosapentaenoate + glutathione disulfide + H2O. The catalysed reaction is (15S)-hydroperoxy-(11Z,13E)-eicosadienoate + 2 glutathione = (15S)-hydroxy-(11Z,13E)-eicosadienoate + glutathione disulfide + H2O. The enzyme catalyses (17S)-hydroperoxy-(4Z,7Z,10Z,13Z,15E,19Z)-docosahexaenoate + 2 glutathione = (17S)-hydroxy-(4Z,7Z,10Z,13Z,15E,19Z)-docosahexaenoate + glutathione disulfide + H2O. It carries out the reaction a hydroperoxy-1,2-diacyl-glycero-3-phosphocholine + 2 glutathione = a hydroxy-1,2-diacyl-glycero-3-phosphocholine + glutathione disulfide + H2O. Functionally, essential antioxidant peroxidase that directly reduces phospholipid hydroperoxide even if they are incorporated in membranes and lipoproteins. Can also reduce fatty acid hydroperoxide, cholesterol hydroperoxide and thymine hydroperoxide. Plays a key role in protecting cells from oxidative damage by preventing membrane lipid peroxidation. Required to prevent cells from ferroptosis, a non-apoptotic cell death resulting from an iron-dependent accumulation of lipid reactive oxygen species. The presence of selenocysteine (Sec) versus Cys at the active site is essential for life: it provides resistance to overoxidation and prevents cells against ferroptosis. The presence of Sec at the active site is also essential for the survival of a specific type of parvalbumin-positive interneurons, thereby preventing against fatal epileptic seizures. May be required to protect cells from the toxicity of ingested lipid hydroperoxides. Required for normal sperm development and male fertility. Essential for maturation and survival of photoreceptor cells. Plays a role in a primary T-cell response to viral and parasitic infection by protecting T-cells from ferroptosis and by supporting T-cell expansion. Plays a role of glutathione peroxidase in platelets in the arachidonic acid metabolism. Reduces hydroperoxy ester lipids formed by a 15-lipoxygenase that may play a role as down-regulator of the cellular 15-lipoxygenase pathway. Can also reduce small soluble hydroperoxides such as H2O2, cumene hydroperoxide and tert-butyl hydroperoxide. In Bos taurus (Bovine), this protein is Phospholipid hydroperoxide glutathione peroxidase.